A 313-amino-acid chain; its full sequence is E3 ubiquitin-protein ligase SINA-like 2 (313 aa).

Residues 1 to 26 (MSGEASTSRRKRQRVPSSVESVENGG) form a disordered region. The RING-type zinc finger occupies 44 to 80 (CPICCHALTSPIFQCDNGHIACSSCCTKLRNKCPSCA). Positions 94–277 (VVEAVMVTCP…LKMEICIRKL (184 aa)) are SBD. An SIAH-type zinc finger spans residues 97–155 (AVMVTCPNVKHGCTEKFSYGKELIHEKDCRFALCYCPAPNCNYSGVYKDLYSHFYVNHY). Zn(2+) is bound by residues Cys102, Cys109, His121, Cys125, Cys132, Cys137, His149, and His154. The interval 278 to 313 (KKDEEEADEDEESEEEEDDDDDDDDDDEEEDADEEE) is disordered. The segment covering 282 to 313 (EEADEDEESEEEEDDDDDDDDDDEEEDADEEE) has biased composition (acidic residues).

This sequence belongs to the SINA (Seven in absentia) family.

The enzyme catalyses S-ubiquitinyl-[E2 ubiquitin-conjugating enzyme]-L-cysteine + [acceptor protein]-L-lysine = [E2 ubiquitin-conjugating enzyme]-L-cysteine + N(6)-ubiquitinyl-[acceptor protein]-L-lysine.. Its pathway is protein modification; protein ubiquitination. In terms of biological role, E3 ubiquitin-protein ligase that mediates ubiquitination and subsequent proteasomal degradation of target proteins. E3 ubiquitin ligases accept ubiquitin from an E2 ubiquitin-conjugating enzyme in the form of a thioester and then directly transfers the ubiquitin to targeted substrates. It probably triggers the ubiquitin-mediated degradation of different substrates. This Arabidopsis thaliana (Mouse-ear cress) protein is E3 ubiquitin-protein ligase SINA-like 2.